A 299-amino-acid chain; its full sequence is Mitochondrial 2-oxodicarboxylate carrier (299 aa).

3 Solcar repeats span residues 11 to 100, 107 to 196, and 205 to 294; these read REAS…YKKL, SPAL…VKNM, and LEFW…TYSW. The next 6 membrane-spanning stretches (helical) occupy residues 17–37, 70–89, 113–133, 167–187, 205–225, and 277–297; these read IVAG…LDVV, FGFY…KRAV, AIAG…FEVV, GLNK…MVYF, LEFW…SVIN, and LGPG…WLQE.

Belongs to the mitochondrial carrier (TC 2.A.29) family. Expressed in placenta, gall bladder and colon.

It localises to the mitochondrion inner membrane. The catalysed reaction is 2-oxoadipate(in) + 2-oxoglutarate(out) = 2-oxoadipate(out) + 2-oxoglutarate(in). The enzyme catalyses hexanedioate(in) + 2-oxoglutarate(out) = hexanedioate(out) + 2-oxoglutarate(in). It carries out the reaction L-2-aminoadipate(in) + 2-oxoglutarate(out) = L-2-aminoadipate(out) + 2-oxoglutarate(in). It catalyses the reaction glutarate(in) + 2-oxoglutarate(out) = glutarate(out) + 2-oxoglutarate(in). The catalysed reaction is 2-oxoheptanedioate(in) + 2-oxoglutarate(out) = 2-oxoheptanedioate(out) + 2-oxoglutarate(in). The enzyme catalyses heptanedioate(in) + 2-oxoglutarate(out) = heptanedioate(out) + 2-oxoglutarate(in). It carries out the reaction citrate(in) + 2-oxoglutarate(out) = citrate(out) + 2-oxoglutarate(in). Functionally, transports dicarboxylates across the inner membranes of mitochondria by a counter-exchange mechanism. Can transport 2-oxoadipate (2-oxohexanedioate), 2-oxoglutarate, adipate (hexanedioate), glutarate, and to a lesser extent, pimelate (heptanedioate), 2-oxopimelate (2-oxoheptanedioate), 2-aminoadipate (2-aminohexanedioate), oxaloacetate, and citrate. Plays a central role in catabolism of lysine, hydroxylysine, and tryptophan, by transporting common metabolite intermediates (such as 2-oxoadipate) into the mitochondria, where it is converted into acetyl-CoA and can enter the citric acid (TCA) cycle. The sequence is that of Mitochondrial 2-oxodicarboxylate carrier (SLC25A21) from Homo sapiens (Human).